A 370-amino-acid chain; its full sequence is MRVKEQLLTLRAYVPGKNIEEVKREYGLSKIVKLASNENPFGCSARVTEALTSLASQYALYPDGHAFELRTQVAKHLGVKVEQLLFGSGLDEVIQMISRALLHEGTNVVMANPTFSQYHHHAVIEGAEVREVSLKDGIHDLDAMLQQVDDQTKIVWICNPNNPTGTYVEKQKLLSFLEAVPKSALVIMDEAYYEYAGAEDYPQTLPLLEKYENLMVLRTFSKAYGLAAFRIGYAVGNTELIGQLEVARLPFNTSTVAQSVALAALEDQAFLQECVKKNEEGLHQYYAFCKEYNVFYYPSQTNFIFLKLGIPGNEAFERLMKKGYIVRSGAAFGIDDGIRITVGLKEENDEIIELLKELVNEQVQKEETYS.

An N6-(pyridoxal phosphate)lysine modification is found at Lys222.

Belongs to the class-II pyridoxal-phosphate-dependent aminotransferase family. Histidinol-phosphate aminotransferase subfamily. As to quaternary structure, homodimer. Pyridoxal 5'-phosphate is required as a cofactor.

The enzyme catalyses L-histidinol phosphate + 2-oxoglutarate = 3-(imidazol-4-yl)-2-oxopropyl phosphate + L-glutamate. Its pathway is amino-acid biosynthesis; L-histidine biosynthesis; L-histidine from 5-phospho-alpha-D-ribose 1-diphosphate: step 7/9. The chain is Histidinol-phosphate aminotransferase 1 from Bacillus cereus (strain ZK / E33L).